The following is a 303-amino-acid chain: Probable 5-dehydro-4-deoxyglucarate dehydratase (303 aa).

Belongs to the DapA family.

It catalyses the reaction 5-dehydro-4-deoxy-D-glucarate + H(+) = 2,5-dioxopentanoate + CO2 + H2O. It functions in the pathway carbohydrate acid metabolism; D-glucarate degradation; 2,5-dioxopentanoate from D-glucarate: step 2/2. In Acinetobacter baumannii (strain SDF), this protein is Probable 5-dehydro-4-deoxyglucarate dehydratase.